The following is a 366-amino-acid chain: Chorismate synthase (366 aa).

2 residues coordinate NADP(+): arginine 48 and arginine 54. Residues 131–133, 243–244, glycine 288, 303–307, and arginine 329 each bind FMN; these read RAS, NA, and KPTPS.

The protein belongs to the chorismate synthase family. Homotetramer. It depends on FMNH2 as a cofactor.

The enzyme catalyses 5-O-(1-carboxyvinyl)-3-phosphoshikimate = chorismate + phosphate. Its pathway is metabolic intermediate biosynthesis; chorismate biosynthesis; chorismate from D-erythrose 4-phosphate and phosphoenolpyruvate: step 7/7. In terms of biological role, catalyzes the anti-1,4-elimination of the C-3 phosphate and the C-6 proR hydrogen from 5-enolpyruvylshikimate-3-phosphate (EPSP) to yield chorismate, which is the branch point compound that serves as the starting substrate for the three terminal pathways of aromatic amino acid biosynthesis. This reaction introduces a second double bond into the aromatic ring system. The chain is Chorismate synthase from Bartonella quintana (strain Toulouse) (Rochalimaea quintana).